Here is a 595-residue protein sequence, read N- to C-terminus: MAETQRPRSAIIVGAGAGGIAVAARLAKAGVDVTVLEKNDFTGGRCSLIHTKAGYRFDQGPSLLLLPGLFRETFEDLGTTLEQEDVELLQCFPNYNIWFSDGKRFSPTTDNATMKVEIEKWEGPDGFRRYLSWLAEGHQHYETSLRHVLHRNFKSILELADPRLVVTLLMALHPFESIWHRAGRYFKTDRMQRVFTFATMYMGMSPFDAPATYSLLQYSELAEGIWYPRGGFHKVLDALVKIGERMGVKYRLNTGVSQVLTDGGKNGKKPKATGVQLENGEVLNADLVVVNADLVYTYNNLLPKEIGGIKKYANKLNNRKASCSSISFYWSLSGMAKELETHNIFLAEEYKESFDAIFERQALPDDPSFYIHVPSRVDPSAAPPDRDAVIALVPVGHLLQNGQPELDWPTLVSKARAGVLATIQARTGLSLSPLITEEIVNTPYTWETKFNLSKGAILGLAHDFFNVLAFRPRTKAQGMDNAYFVGASTHPGTGVPIVLAGAKITAEQILEETFPKNTKVPWTTNEERNSERMRKEMDEKITEEGIIMRSNSSKPGRRGSDAFEGAMEVVNLLSQRAFPLLVALMGVLYFLLFVR.

The N-terminal stretch at 1–23 (MAETQRPRSAIIVGAGAGGIAVA) is a signal peptide. Residues 574-594 (SQRAFPLLVALMGVLYFLLFV) traverse the membrane as a helical segment.

It belongs to the carotenoid/retinoid oxidoreductase family. The cofactor is NAD(+).

It localises to the membrane. The catalysed reaction is 15-cis-phytoene + A = all-trans-phytofluene + AH2. The enzyme catalyses all-trans-phytofluene + A = all-trans-zeta-carotene + AH2. It carries out the reaction all-trans-zeta-carotene + A = all-trans-neurosporene + AH2. It catalyses the reaction all-trans-neurosporene + A = all-trans-lycopene + AH2. The catalysed reaction is all-trans-lycopene + A = all-trans-3,4-didehydrolycopene + AH2. It participates in carotenoid biosynthesis; lycopene biosynthesis. Its function is as follows. Phytoene desaturase involved in the carotenoid biosynthesis pathway. Converts phytoene into 3,4-didehydrolycopene via the intermediates phytofluene, zeta-carotene, neurosporene and lycopene, by introducing up to five double bonds into phytoene. Is also able to desaturate 1-hydroxyneurosporene into 1-hydroxylycopene and 1-hydroxylycopene into 1-hydroxy-3,4-didehydrolycopene. Gamma-carotene and 1,19-dihydroxylycopene are not accepted as substrates. Neurosporaxanthin is synthesized from geranyl-geranyl pyrophosphate (GGPP) through several enzymatic activities. Phytoene synthase activity performed by the bifunctional enzyme al-2 first produces phytoene from geranyl-geranyl pyrophosphate (GGPP). The phytoene dehydrogenase al-1 then introduces 5 desaturations to lead to 3,4-didehydrolycopene via the intermediates phytofluene, zeta-carotene, neurosporene and lycopene. Al-2 cyclase activity then converts 3,4-didehydrolycopene into torulene. Al-2 can also convet lycopene into gamma-carotene which in turn is converted to beta-carotene by an additional al-2 cyclization reaction. Torulene is the substrate of the dioxidase cao-2 that breaks the molecule, removing five carbon atoms to yield beta-apo-4'-carotenal, whereas the aldehyde dehydrogenase ylo-1 mediates the last step by converting beta-apo-4'-carotenal into neurosporaxanthin. The protein is Phytoene desaturase of Neurospora crassa (strain ATCC 24698 / 74-OR23-1A / CBS 708.71 / DSM 1257 / FGSC 987).